A 1220-amino-acid polypeptide reads, in one-letter code: DNA polymerase catalytic subunit (1220 aa).

2 disordered regions span residues 21-43 and 641-691; these read GKRP…RPPQ and QADA…KPGV. Residues 646–660 show a composition bias toward polar residues; the sequence is SETSELAMDSQSHAF.

It belongs to the DNA polymerase type-B family. In terms of assembly, forms a complex with the ssDNA-binding protein, the DNA polymerase processivity factor, and the alkaline exonuclease. Interacts with the helicase-primase complex composed of the primase, the helicase and the primase-associated factor; this interaction may coordinate leading and lagging strand DNA synthesis at the replication fork.

It is found in the host nucleus. It carries out the reaction DNA(n) + a 2'-deoxyribonucleoside 5'-triphosphate = DNA(n+1) + diphosphate. The enzyme catalyses Endonucleolytic cleavage to 5'-phosphomonoester.. Its function is as follows. Replicates viral genomic DNA. The replication complex is composed of six viral proteins: the DNA polymerase, processivity factor, primase, primase-associated factor, helicase, and ssDNA-binding protein. Additionally, the polymerase contains an intrinsic ribonuclease H (RNase H) activity that specifically degrades RNA/DNA heteroduplexes or duplex DNA substrates in the 5' to 3' direction. Therefore, it can catalyze the excision of the RNA primers that initiate the synthesis of Okazaki fragments at a replication fork during viral DNA replication. In Equine herpesvirus 1 (strain Ab4p) (EHV-1), this protein is DNA polymerase catalytic subunit.